The chain runs to 266 residues: tRNA pseudouridine synthase A (266 aa).

Asp53 functions as the Nucleophile in the catalytic mechanism. Residue Tyr109 coordinates substrate.

It belongs to the tRNA pseudouridine synthase TruA family.

It carries out the reaction uridine(38/39/40) in tRNA = pseudouridine(38/39/40) in tRNA. Functionally, formation of pseudouridine at positions 38, 39 and 40 in the anticodon stem and loop of transfer RNAs. The polypeptide is tRNA pseudouridine synthase A (Methanocella arvoryzae (strain DSM 22066 / NBRC 105507 / MRE50)).